The chain runs to 243 residues: Mesoderm posterior protein 1 (243 aa).

The interval 1–86 (MAQPLCEPRS…QRQSASEREK (86 aa)) is disordered. Positions 27–36 (DGNSVCSPAW) are enriched in polar residues. Positions 76–130 (GQRQSASEREKLRMRTLARALHELRRFLPPSVAPTGQNLTKIETLRLAIRYIGHL) constitute a bHLH domain. A CPLCP motif is present at residues 153–157 (CPLCP). Positions 204–228 (AETASQERQEMEPSPSSPLFSSDML) are disordered.

As to expression, no expression was detected in adult tissues except the testis. Expression in the testis was regulated developmentally; expressed 2 weeks after birth, and increases, reaching the full expression level in mature testes.

It is found in the nucleus. Transcription factor. Plays a role in the epithelialization of somitic mesoderm and in the development of cardiac mesoderm. Defines the rostrocaudal patterning of the somites by participating in distinct Notch pathways. The sequence is that of Mesoderm posterior protein 1 (Mesp1) from Mus musculus (Mouse).